The primary structure comprises 354 residues: Probable cinnamyl alcohol dehydrogenase 5 (354 aa).

Cysteine 43 lines the Zn(2+) pocket. Serine 45 contributes to the NADP(+) binding site. Zn(2+) contacts are provided by histidine 65, glutamate 66, cysteine 96, cysteine 99, cysteine 102, cysteine 110, and cysteine 159. NADP(+) contacts are provided by residues threonine 163, 184–189, 207–212, threonine 247, glycine 271, and 294–296; these read GLGGLG, SSSPGK, and SCI.

Belongs to the zinc-containing alcohol dehydrogenase family. Homodimer. The cofactor is Zn(2+).

It catalyses the reaction (E)-cinnamyl alcohol + NADP(+) = (E)-cinnamaldehyde + NADPH + H(+). The enzyme catalyses (E)-coniferol + NADP(+) = (E)-coniferaldehyde + NADPH + H(+). The catalysed reaction is (E)-sinapyl alcohol + NADP(+) = (E)-sinapaldehyde + NADPH + H(+). It carries out the reaction (E)-4-coumaroyl alcohol + NADP(+) = (E)-4-coumaraldehyde + NADPH + H(+). It catalyses the reaction (E)-caffeyl alcohol + NADP(+) = (E)-caffeyl aldehyde + NADPH + H(+). The protein operates within aromatic compound metabolism; phenylpropanoid biosynthesis. In terms of biological role, involved in lignin biosynthesis. Catalyzes the final step specific for the production of lignin monomers. Catalyzes the NADPH-dependent reduction of coniferaldehyde, 5-hydroxyconiferaldehyde, sinapaldehyde, 4-coumaraldehyde and caffeyl aldehyde to their respective alcohols. This is Probable cinnamyl alcohol dehydrogenase 5 from Oryza sativa subsp. japonica (Rice).